The following is a 118-amino-acid chain: uncharacterized protein (118 aa).

This is an uncharacterized protein from Sulfolobus islandicus filamentous virus (isolate Iceland/Hveragerdi) (SIFV).